The primary structure comprises 249 residues: Thrombin-like enzyme barnettobin (249 aa).

Positions 1–10 (APKELQVSYA) are cleaved as a signal peptide. Residues 11–16 (HKSSEL) constitute a propeptide that is removed on maturation. The 224-residue stretch at 17–240 (VIGGDECDIN…YPPWIQSIIA (224 aa)) folds into the Peptidase S1 domain. 6 cysteine pairs are disulfide-bonded: cysteine 23–cysteine 154, cysteine 41–cysteine 57, cysteine 89–cysteine 247, cysteine 133–cysteine 201, cysteine 165–cysteine 180, and cysteine 191–cysteine 216. Residues histidine 56 and aspartate 101 each act as charge relay system in the active site. N-linked (GlcNAc...) asparagine glycans are attached at residues asparagine 145 and asparagine 161. Serine 195 serves as the catalytic Charge relay system. A glycan (N-linked (GlcNAc...) asparagine) is linked at asparagine 242.

This sequence belongs to the peptidase S1 family. Snake venom subfamily. Monomer. In terms of processing, glycoprotein, contains approx. 52% carbohydrate which could be removed by N-glycosidase. Glycosylation is important, since deglycosylated barnettobin loses its clotting and defibrinogenating effects. In terms of tissue distribution, expressed by the venom gland.

It is found in the secreted. Its activity is regulated as follows. Both coagulant and amidolytic activities are inhibited by PMSF. Amidolytic activity is partially inhibited by DTT, chymostatin, SBTI and TLCK, but not by heparin and EDTA. In terms of biological role, thrombin-like snake venom serine protease that releases only fibrinopeptide A from human Aalpha chain of fibrinogen (specific coagulant activity was 251.7 NIH thrombin units/mg). Also shows fibrino(geno)lytic activities in vitro and defibrinogenating effects in vivo. This is Thrombin-like enzyme barnettobin from Bothrops barnetti (Barnett's lancehead).